The sequence spans 153 residues: Large ribosomal subunit protein uL13 (153 aa).

Belongs to the universal ribosomal protein uL13 family. In terms of assembly, part of the 50S ribosomal subunit.

In terms of biological role, this protein is one of the early assembly proteins of the 50S ribosomal subunit, although it is not seen to bind rRNA by itself. It is important during the early stages of 50S assembly. The sequence is that of Large ribosomal subunit protein uL13 from Chelativorans sp. (strain BNC1).